We begin with the raw amino-acid sequence, 96 residues long: Integration host factor subunit beta (96 aa).

The interval 59–86 is disordered; it reads RVGRNPKTGETVELDGKHVPHFKPGKEL. Over residues 72–86 the composition is skewed to basic and acidic residues; the sequence is LDGKHVPHFKPGKEL.

Belongs to the bacterial histone-like protein family. Heterodimer of an alpha and a beta chain.

In terms of biological role, this protein is one of the two subunits of integration host factor, a specific DNA-binding protein that functions in genetic recombination as well as in transcriptional and translational control. The chain is Integration host factor subunit beta from Pseudoalteromonas atlantica (strain T6c / ATCC BAA-1087).